A 96-amino-acid chain; its full sequence is Guanyl-specific ribonuclease Sa (96 aa).

The cysteines at positions 7 and 96 are disulfide-linked. Glu-54 acts as the Proton acceptor in catalysis. The active-site Proton donor is His-85.

The protein belongs to the ribonuclease N1/T1 family.

The protein resides in the secreted. It catalyses the reaction [RNA] containing guanosine + H2O = an [RNA fragment]-3'-guanosine-3'-phosphate + a 5'-hydroxy-ribonucleotide-3'-[RNA fragment].. This is Guanyl-specific ribonuclease Sa (rnaSA) from Kitasatospora aureofaciens (Streptomyces aureofaciens).